Here is a 48-residue protein sequence, read N- to C-terminus: Large ribosomal subunit protein bL33A (48 aa).

The protein belongs to the bacterial ribosomal protein bL33 family.

This is Large ribosomal subunit protein bL33A from Streptococcus pyogenes serotype M28 (strain MGAS6180).